The primary structure comprises 197 residues: Recombination protein RecR (197 aa).

The segment at 56–71 (CRLCNNFSEAEVCEVC) adopts a C4-type zinc-finger fold. The Toprim domain occupies 79–174 (RQLAVVEMPA…KVSRLARGVP (96 aa)).

The protein belongs to the RecR family.

May play a role in DNA repair. It seems to be involved in an RecBC-independent recombinational process of DNA repair. It may act with RecF and RecO. This chain is Recombination protein RecR, found in Thiobacillus denitrificans (strain ATCC 25259 / T1).